The following is a 350-amino-acid chain: Probable choline kinase 2 (350 aa).

3 residues coordinate ATP: arginine 73, glutamine 210, and aspartate 227.

It belongs to the choline/ethanolamine kinase family.

It catalyses the reaction choline + ATP = phosphocholine + ADP + H(+). Its pathway is phospholipid metabolism; phosphatidylcholine biosynthesis; phosphocholine from choline: step 1/1. In terms of biological role, involved in phospholipid biosynthesis. Catalyzes the first step in phosphatidylcholine biosynthesis. In Arabidopsis thaliana (Mouse-ear cress), this protein is Probable choline kinase 2.